We begin with the raw amino-acid sequence, 448 residues long: UDP-N-acetylmuramoylalanine--D-glutamate ligase (448 aa).

Gly116 to Thr122 serves as a coordination point for ATP.

Belongs to the MurCDEF family.

The protein resides in the cytoplasm. The enzyme catalyses UDP-N-acetyl-alpha-D-muramoyl-L-alanine + D-glutamate + ATP = UDP-N-acetyl-alpha-D-muramoyl-L-alanyl-D-glutamate + ADP + phosphate + H(+). The protein operates within cell wall biogenesis; peptidoglycan biosynthesis. Cell wall formation. Catalyzes the addition of glutamate to the nucleotide precursor UDP-N-acetylmuramoyl-L-alanine (UMA). This Pseudomonas fluorescens (strain Pf0-1) protein is UDP-N-acetylmuramoylalanine--D-glutamate ligase.